The sequence spans 112 residues: Elongin-C (112 aa).

This sequence belongs to the SKP1 family. Heterotrimer of an A (ELOA, ELOA2 or ELOA3P), ELOB and ELOC subunit. The elongin BC complex interacts with EPOP; leading to recruit the elongin BC complex to Polycomb group (PcG) target genes, thereby restricting excessive activity of the PRC2/EED-EZH2 complex. Component of multiple cullin-RING E3 ubiquitin-protein ligase complexes composed of Elongin BC (ELOB and ELOC), a cullin (CUL2 or CUL5), a catalytic subunit (RBX1 or RNF7/RBX2), as well as a substrate adapter protein that can be either ASB2, ASB9, ASB11, KLHDC2, KLHDC3, KLHDC10, APPBP2, FEM1A, FEM1B, FEM1C, LRR1, PCMTD1, SOCS1, SOCS2, SOCS5, SPSB1, SPSB3, ELOA, VHL, WSB1, ZYG11B or RAB40C. Interacts with TMF1. As part of the Elongin BC E3 ubiquitin ligase complex; interacts with NRBP1. May form oligomers as a KLHDC2/KLHDC3-ELOB-ELOC complex; this interaction is autoinhibitory for the E3 ligase complex as the substrate-binding site of KLHDC2/KLHDC3 is blocked in the oligomer. Post-translationally, ubiquitinated by the DCX(AMBRA1) complex, leading to its degradation by the proteasome.

The protein localises to the nucleus. The protein operates within protein modification; protein ubiquitination. Its function is as follows. SIII, also known as elongin, is a general transcription elongation factor that increases the RNA polymerase II transcription elongation past template-encoded arresting sites. Subunit A is transcriptionally active and its transcription activity is strongly enhanced by binding to the dimeric complex of the SIII regulatory subunits B and C (elongin BC complex). In embryonic stem cells, the elongin BC complex is recruited by EPOP to Polycomb group (PcG) target genes in order generate genomic region that display both active and repressive chromatin properties, an important feature of pluripotent stem cells. Functionally, core component of multiple cullin-RING-based ECS (ElonginB/C-CUL2/5-SOCS-box protein) E3 ubiquitin-protein ligase complexes, which mediate the ubiquitination of target proteins. By binding to BC-box motifs it seems to link target recruitment subunits, like VHL and members of the SOCS box family, to Cullin/RBX1 modules that activate E2 ubiquitination enzymes. Component the von Hippel-Lindau ubiquitination complex CBC(VHL). A number of ECS complexes (containing either KLHDC2, KLHDC3, KLHDC10, APPBP2, FEM1A, FEM1B or FEM1C as substrate-recognition component) are part of the DesCEND (destruction via C-end degrons) pathway, which recognizes a C-degron located at the extreme C terminus of target proteins, leading to their ubiquitination and degradation. The ECS(ASB9) complex mediates ubiquitination and degradation of CKB. As part of a multisubunit ubiquitin ligase complex, polyubiquitinates monoubiquitinated POLR2A. ECS(LRR1) ubiquitinates MCM7 and promotes CMG replisome disassembly by VCP and chromatin extraction during S-phase. As part of the ECS(RAB40C) complex, mediates ANKRD28 ubiquitination and degradation, thereby inhibiting protein phosphatase 6 (PP6) complex activity and focal adhesion assembly during cell migration. The protein is Elongin-C (ELOC) of Bos taurus (Bovine).